The chain runs to 170 residues: Small ribosomal subunit protein bS16 (170 aa).

Residues A109–E170 are disordered. The span at A131–A150 shows a compositional bias: basic and acidic residues. Residues E151 to E170 show a composition bias toward low complexity.

Belongs to the bacterial ribosomal protein bS16 family.

The sequence is that of Small ribosomal subunit protein bS16 from Mycolicibacterium gilvum (strain PYR-GCK) (Mycobacterium gilvum (strain PYR-GCK)).